A 403-amino-acid chain; its full sequence is D-galactonate dehydratase family member RspA (403 aa).

Residues N37 and H122 each coordinate substrate. Residue Y159 is the Proton donor/acceptor of the active site. Position 211 (D211) interacts with Mg(2+). The Proton donor/acceptor role is filled by H213. Mg(2+)-binding residues include E237 and E263. Residues E263, R284, H313, D317, and E340 each coordinate substrate.

This sequence belongs to the mandelate racemase/muconate lactonizing enzyme family. GalD subfamily. Mg(2+) serves as cofactor.

The enzyme catalyses D-mannonate = 2-dehydro-3-deoxy-D-gluconate + H2O. The catalysed reaction is D-gluconate = 2-dehydro-3-deoxy-D-gluconate + H2O. Its function is as follows. Has low dehydratase activity with D-mannonate and D-gluconate, suggesting that these are not physiological substrates and that it has no significant role in the in vivo degradation of these compounds. Has no detectable activity with a panel of 70 other acid sugars (in vitro). This is D-galactonate dehydratase family member RspA (rspA) from Halomonas elongata (strain ATCC 33173 / DSM 2581 / NBRC 15536 / NCIMB 2198 / 1H9).